Here is a 481-residue protein sequence, read N- to C-terminus: Pre-mRNA-splicing factor sap114 (481 aa).

Over residues 1–15 the composition is skewed to polar residues; it reads MSSLMEFQDRNTTNN. The tract at residues 1–34 is disordered; that stretch reads MSSLMEFQDRNTTNNETEHQKSITDQSSSVPAGV. 2 SURP motif repeats span residues 44 to 86 and 147 to 189; these read IIDK…HPYY and VLRL…YPYF. Disordered regions lie at residues 335–373 and 452–481; these read PSLASPEKGGISSTTSVSPAAQASPVLSTTTQPKVQKPV and GVEISQEEIERRKRAATQSAWGATPTNKRR. Polar residues-rich tracts occupy residues 345-368 and 467-481; these read ISSTTSVSPAAQASPVLSTTTQPK and ATQSAWGATPTNKRR.

As to quaternary structure, belongs to the 40S cdc5-associated complex (or cwf complex), a spliceosome sub-complex reminiscent of a late-stage spliceosome composed of the U2, U5 and U6 snRNAs and at least brr2, cdc5, cwf2/prp3, cwf3/syf1, cwf4/syf3, cwf5/ecm2, spp42/cwf6, cwf7/spf27, cwf8, cwf9, cwf10, cwf11, cwf12, prp45/cwf13, cwf14, cwf15, cwf16, cwf17, cwf18, cwf19, cwf20, cwf21, cwf22, cwf23, cwf24, cwf25, cwf26, cyp7/cwf27, cwf28, cwf29/ist3, lea1, msl1, prp5/cwf1, prp10, prp12/sap130, prp17, prp22, sap61, sap62, sap114, sap145, slu7, smb1, smd1, smd3, smf1, smg1 and syf2.

The protein resides in the nucleus. Functionally, involved in pre-mRNA splicing. May be involved in endoplasmic reticulum-associated protein degradation (ERAD) and required for growth at low and high temperatures. The chain is Pre-mRNA-splicing factor sap114 (sap114) from Schizosaccharomyces pombe (strain 972 / ATCC 24843) (Fission yeast).